Here is a 101-residue protein sequence, read N- to C-terminus: uncharacterized protein (101 aa).

Residues 70 to 90 (VLFIPIILLLPPSCPLTGVTV) traverse the membrane as a helical segment.

It is found in the membrane. This is an uncharacterized protein from Saccharomyces cerevisiae (strain ATCC 204508 / S288c) (Baker's yeast).